A 364-amino-acid polypeptide reads, in one-letter code: Caveolae-associated protein 4 (364 aa).

Residues 1 to 24 (MEHNGSASNADKIHQNRLSSVTED) form a disordered region. The stretch at 44 to 77 (VDSVQASQKRIEERHREMENAIKSVQIDLLKLSQ) forms a coiled coil. Phosphoserine occurs at positions 172 and 173. Residues 202–226 (FSKENMQKTRQNLDKKVNRIRTRIV) are a coiled coil. Positions 231–256 (RERLRQSGERLRQSGERLRQSGERFK) are enriched in basic and acidic residues. Disordered regions lie at residues 231–283 (RERL…RTVA) and 311–339 (SDEL…TPEP). Y326 carries the post-translational modification Phosphotyrosine. T336 bears the Phosphothreonine mark. Phosphoserine is present on S355.

The protein belongs to the CAVIN family. Component of the CAVIN complex composed of CAVIN1, CAVIN2, CAVIN3 and CAVIN4. Interacts with CAVIN1, ADRA1A and ADRA1B. Interacts with CAVIN2; this augments the transactivation of NPPA. Interacts with CAV3. Interacts with MAPK1 and MAPK3.

It localises to the cytoplasm. Its subcellular location is the myofibril. It is found in the sarcomere. The protein localises to the cytosol. The protein resides in the cell membrane. It localises to the sarcolemma. Its subcellular location is the membrane. It is found in the caveola. Its function is as follows. Modulates the morphology of formed caveolae in cardiomyocytes, but is not required for caveolar formation. Facilitates the recruitment of MAPK1/3 to caveolae within cardiomyocytes and regulates alpha-1 adrenergic receptor-induced hypertrophic responses in cardiomyocytes through MAPK1/3 activation. Contributes to proper membrane localization and stabilization of caveolin-3 (CAV3) in cardiomyocytes. Induces RHOA activation and activates NPPA transcription and myofibrillar organization through the Rho/ROCK signaling pathway. In Homo sapiens (Human), this protein is Caveolae-associated protein 4.